A 168-amino-acid polypeptide reads, in one-letter code: Large ribosomal subunit protein uL16 (168 aa).

This sequence belongs to the universal ribosomal protein uL16 family.

The sequence is that of Large ribosomal subunit protein uL16 from Thermofilum pendens (strain DSM 2475 / Hrk 5).